The following is a 194-amino-acid chain: Holliday junction branch migration complex subunit RuvA (194 aa).

The tract at residues 1-64 (MIGRLRGVLT…DDSAALYGFL (64 aa)) is domain I. The tract at residues 65-140 (SESERRLFRH…RAADFNNGIS (76 aa)) is domain II. The tract at residues 140–144 (STSGK) is flexible linker. The tract at residues 145–194 (LNLDTVSEAALALQQLGYKPAEAARMARDAGTESDDVASVIKKALQAALR) is domain III.

The protein belongs to the RuvA family. As to quaternary structure, homotetramer. Forms an RuvA(8)-RuvB(12)-Holliday junction (HJ) complex. HJ DNA is sandwiched between 2 RuvA tetramers; dsDNA enters through RuvA and exits via RuvB. An RuvB hexamer assembles on each DNA strand where it exits the tetramer. Each RuvB hexamer is contacted by two RuvA subunits (via domain III) on 2 adjacent RuvB subunits; this complex drives branch migration. In the full resolvosome a probable DNA-RuvA(4)-RuvB(12)-RuvC(2) complex forms which resolves the HJ.

It localises to the cytoplasm. The RuvA-RuvB-RuvC complex processes Holliday junction (HJ) DNA during genetic recombination and DNA repair, while the RuvA-RuvB complex plays an important role in the rescue of blocked DNA replication forks via replication fork reversal (RFR). RuvA specifically binds to HJ cruciform DNA, conferring on it an open structure. The RuvB hexamer acts as an ATP-dependent pump, pulling dsDNA into and through the RuvAB complex. HJ branch migration allows RuvC to scan DNA until it finds its consensus sequence, where it cleaves and resolves the cruciform DNA. The sequence is that of Holliday junction branch migration complex subunit RuvA from Xylella fastidiosa (strain 9a5c).